Reading from the N-terminus, the 140-residue chain is Alkaline proteinase inhibitor (140 aa).

A signal peptide spans 1–25; the sequence is MPSSVQATAGLLATLMMFCGEVAMA.

This sequence belongs to the protease inhibitor I38 family.

It localises to the periplasm. In terms of biological role, inhibitor of the alkaline protease. This Pseudomonas brassicacearum (strain NFM421) protein is Alkaline proteinase inhibitor (inh).